A 492-amino-acid chain; its full sequence is Bifunctional purine biosynthesis protein PurH (492 aa).

Residues 1-144 (MKKAILSVSN…KNYKHVTTIV (144 aa)) enclose the MGS-like domain.

It belongs to the PurH family.

It carries out the reaction (6R)-10-formyltetrahydrofolate + 5-amino-1-(5-phospho-beta-D-ribosyl)imidazole-4-carboxamide = 5-formamido-1-(5-phospho-D-ribosyl)imidazole-4-carboxamide + (6S)-5,6,7,8-tetrahydrofolate. The enzyme catalyses IMP + H2O = 5-formamido-1-(5-phospho-D-ribosyl)imidazole-4-carboxamide. Its pathway is purine metabolism; IMP biosynthesis via de novo pathway; 5-formamido-1-(5-phospho-D-ribosyl)imidazole-4-carboxamide from 5-amino-1-(5-phospho-D-ribosyl)imidazole-4-carboxamide (10-formyl THF route): step 1/1. It participates in purine metabolism; IMP biosynthesis via de novo pathway; IMP from 5-formamido-1-(5-phospho-D-ribosyl)imidazole-4-carboxamide: step 1/1. The protein is Bifunctional purine biosynthesis protein PurH of Staphylococcus aureus (strain USA300).